The chain runs to 315 residues: Deoxyribonuclease-1-like 1 (315 aa).

A signal peptide spans 1–29 (MDSSGGFQKHTCGHALLLLLLLLAGGAEA). Residues Glu-108 and His-159 contribute to the active site. Cysteines 198 and 235 form a disulfide. The N-linked (GlcNAc...) asparagine glycan is linked to Asn-272.

Belongs to the DNase I family.

It localises to the endoplasmic reticulum. The protein is Deoxyribonuclease-1-like 1 (DNASE1L1) of Sus scrofa (Pig).